Here is a 435-residue protein sequence, read N- to C-terminus: Arginine biosynthesis bifunctional protein ArgJ, mitochondrial (435 aa).

Residues Thr167, Lys193, Thr204, Glu291, Asn430, and Thr435 each contribute to the substrate site. Thr204 acts as the Nucleophile in catalysis.

The protein belongs to the ArgJ family. As to quaternary structure, heterodimer of an alpha and a beta chain. In terms of processing, the alpha and beta chains are autoproteolytically processed from a single precursor protein within the mitochondrion.

The protein localises to the mitochondrion matrix. The enzyme catalyses N(2)-acetyl-L-ornithine + L-glutamate = N-acetyl-L-glutamate + L-ornithine. It catalyses the reaction L-glutamate + acetyl-CoA = N-acetyl-L-glutamate + CoA + H(+). It functions in the pathway amino-acid biosynthesis; L-arginine biosynthesis; L-ornithine and N-acetyl-L-glutamate from L-glutamate and N(2)-acetyl-L-ornithine (cyclic): step 1/1. The protein operates within amino-acid biosynthesis; L-arginine biosynthesis; N(2)-acetyl-L-ornithine from L-glutamate: step 1/4. Functionally, catalyzes two activities which are involved in the cyclic version of arginine biosynthesis: the synthesis of acetylglutamate from glutamate and acetyl-CoA, and of ornithine by transacetylation between acetylornithine and glutamate. This chain is Arginine biosynthesis bifunctional protein ArgJ, mitochondrial, found in Heterostelium pallidum (strain ATCC 26659 / Pp 5 / PN500) (Cellular slime mold).